A 450-amino-acid chain; its full sequence is Allergen Fus c 3 (450 aa).

Disordered stretches follow at residues Glu-18–Gln-87, Asp-99–Pro-148, Ser-185–Glu-377, and Gln-398–Ser-426. Residues Pro-31–Thr-46 show a composition bias toward polar residues. Low complexity predominate over residues His-101–Gly-112. Positions Ala-113 to Arg-125 are enriched in basic and acidic residues. Residues Arg-272 to Pro-286 are compositionally biased toward basic residues. Over residues Asp-291–Thr-304 the composition is skewed to polar residues. Over residues Ala-305–Ser-341 the composition is skewed to low complexity. Over residues Thr-356–Glu-377 the composition is skewed to basic and acidic residues. The region spanning Arg-368–Leu-441 is the bHLH domain.

This Fusarium culmorum protein is Allergen Fus c 3.